The following is a 519-amino-acid chain: MTEPLLTMRGIVKAFDGVKALDGIDLTVRPGECVGLCGENGAGKSTLMKVLSGVYPHGTWDGEIRWEGAPLVASGVRDTERAGIVIIHQELMLVPELSVAENIFLGNEITLPGGRMHYAEMVRRSEALLRDLRIDAINVAQPVMNYGGGHQQLIEIAKALNKRAKLLILDEPSSSLSAAETRILLDIVRDLKRRGVACVYISHKLDEVDAVCDTVTVIRDGRHVATEPMSTLTTDRIIAMMVGREIRNLYPREPHEIGDVVLEARNVTCHDVANPRRKRVDDVSFAVRRGEILGVAGLVGAGRTELMQAIFGAYPGASTASIRMNGRPLAIRAPADAIRAGIAMVPEDRKRHGIVPQLGVGHNITLSVLRRFATRGRIDAAAELDAIRTEMQRLSVRAAHPFLPIASLSGGNQQKAVLARMLLADPQVLILDEPTRGVDVGAKAEIYRLIFALAKRGVALIVVSSELPEVLGLADRVLVIGEGELRGDFVNDGLTQEQILGAALTPARRPAEPIAASNP.

2 consecutive ABC transporter domains span residues 6-245 and 262-507; these read LTMR…VGRE and LEAR…LTPA. 38–45 provides a ligand contact to ATP; the sequence is GENGAGKS.

The protein belongs to the ABC transporter superfamily. Xylose importer (TC 3.A.1.2.4) family. The complex is composed of two ATP-binding proteins (XylG), two transmembrane proteins (XylH) and a solute-binding protein (XylF).

It is found in the cell inner membrane. It catalyses the reaction D-xylose(out) + ATP + H2O = D-xylose(in) + ADP + phosphate + H(+). Functionally, part of the ABC transporter complex XylFGH involved in xylose import. Responsible for energy coupling to the transport system. This chain is Xylose import ATP-binding protein XylG, found in Burkholderia ambifaria (strain ATCC BAA-244 / DSM 16087 / CCUG 44356 / LMG 19182 / AMMD) (Burkholderia cepacia (strain AMMD)).